We begin with the raw amino-acid sequence, 258 residues long: TLC domain-containing protein 4-A (258 aa).

6 helical membrane-spanning segments follow: residues 5 to 25 (LISY…FSAI), 52 to 72 (FVST…LAYD), 85 to 105 (FWVK…LLLL), 116 to 132 (YMVC…GYVL), 171 to 191 (PVLL…IAVI), and 212 to 232 (IGPQ…NVFW). A TLC domain is found at 43-245 (GKQCEWDSRF…IARGFYKVVK (203 aa)).

Belongs to the TLCD4 family.

The protein localises to the membrane. The protein is TLC domain-containing protein 4-A (tlcd4-a) of Xenopus laevis (African clawed frog).